The following is a 153-amino-acid chain: Ribosome maturation factor RimP (153 aa).

The protein belongs to the RimP family.

Its subcellular location is the cytoplasm. Functionally, required for maturation of 30S ribosomal subunits. This is Ribosome maturation factor RimP from Christiangramia forsetii (strain DSM 17595 / CGMCC 1.15422 / KT0803) (Gramella forsetii).